We begin with the raw amino-acid sequence, 216 residues long: Acyl-homoserine-lactone synthase (216 aa).

Belongs to the autoinducer synthase family.

The enzyme catalyses a fatty acyl-[ACP] + S-adenosyl-L-methionine = an N-acyl-L-homoserine lactone + S-methyl-5'-thioadenosine + holo-[ACP] + H(+). Required for the synthesis of an acyl-HSL autoinducer that binds to YukR and which is involved in the regulation of motility and morphology. The polypeptide is Acyl-homoserine-lactone synthase (yukI) (Yersinia ruckeri).